The following is a 129-amino-acid chain: Lysozyme C (129 aa).

The C-type lysozyme domain maps to 1–129 (KVYGRCELAA…VHAWIRGCRL (129 aa)). 4 disulfide bridges follow: C6/C127, C30/C115, C64/C80, and C76/C94. Residues E35 and D52 contribute to the active site.

It belongs to the glycosyl hydrolase 22 family. As to quaternary structure, monomer.

The protein localises to the secreted. The enzyme catalyses Hydrolysis of (1-&gt;4)-beta-linkages between N-acetylmuramic acid and N-acetyl-D-glucosamine residues in a peptidoglycan and between N-acetyl-D-glucosamine residues in chitodextrins.. Its function is as follows. Lysozymes have primarily a bacteriolytic function; those in tissues and body fluids are associated with the monocyte-macrophage system and enhance the activity of immunoagents. This is Lysozyme C (LYZ) from Pavo cristatus (Indian peafowl).